The sequence spans 138 residues: ATP synthase epsilon chain (138 aa).

This sequence belongs to the ATPase epsilon chain family. As to quaternary structure, F-type ATPases have 2 components, CF(1) - the catalytic core - and CF(0) - the membrane proton channel. CF(1) has five subunits: alpha(3), beta(3), gamma(1), delta(1), epsilon(1). CF(0) has three main subunits: a, b and c.

The protein resides in the cell inner membrane. Produces ATP from ADP in the presence of a proton gradient across the membrane. In Bartonella henselae (strain ATCC 49882 / DSM 28221 / CCUG 30454 / Houston 1) (Rochalimaea henselae), this protein is ATP synthase epsilon chain.